Reading from the N-terminus, the 495-residue chain is MVFSVSIFASLAPYLISAFLLFLLVEQLSYLFKKRNIPGPFFVPPIIGNAVALVRDPTSFWDKQSSTANISGLSANYLIGKFIVYIRDTELSHQIFSNVRPDAFHLIGHPFGKKLFGDHNLIYMFGEDHKSVRRQLAPNFTPKALSTYSALQQLVILRHLRQWEGSTSGGSRPVSLRQLVRELNLETSQTVFVGPYLDKEAKNRFRTDYNLFNLGSMALPIDLPGFAFGEARRAVKRLGETLGICAGKSKARMAAGEEPACLIDFWMQAIVAENPQPPHSGDEEIGGLLFDFLFAAQDASTSSLLWAVTLLDSEPEVLNRVREEVAKIWSPESNALITVDQLAEMKYTRSVAREVIRYRPPATMVPHVAAIDFPLTETYTIPKGTIVFPSVFDSSFQGFTEPDRFDPDRFSETRQEDQVFKRNFLAFGWGPHQCVGQRYALNHLVLFIAMFSSLLDFKRLRSDGCDEIVYCPTISPKDGCTVFLSRRVAKYPNFS.

The chain crosses the membrane as a helical span at residues 5 to 25 (VSIFASLAPYLISAFLLFLLV). Cysteine 434 is a heme binding site.

Belongs to the cytochrome P450 family. The cofactor is heme. In terms of tissue distribution, expressed in the vascular tissues of roots, shoots and leaves. Expressed in root tips and sepals. Very low expression in stems and siliques.

It is found in the membrane. It carries out the reaction 5-dehydroepisterol + NADPH + O2 + H(+) = ergosta-5,7,22,24(28)-tetraen-3beta-ol + NADP(+) + 2 H2O. The protein operates within steroid biosynthesis; sterol biosynthesis. Its function is as follows. Required to form the C-22 double bond in the sterol side chain. Possesses in vitro C-22 desaturase activity toward beta-sitosterol and produces stigmasterol. No activity with campesterol. The polypeptide is Cytochrome P450 710A1 (Arabidopsis thaliana (Mouse-ear cress)).